Here is a 325-residue protein sequence, read N- to C-terminus: Elongation factor P--(R)-beta-lysine ligase (325 aa).

Residue 76 to 78 participates in substrate binding; it reads SPE. ATP is bound by residues 100–102 and Asn-109; that span reads RNE. Tyr-118 lines the substrate pocket. ATP is bound at residue 244–245; it reads EL. Glu-251 is a binding site for substrate. Gly-300 lines the ATP pocket.

This sequence belongs to the class-II aminoacyl-tRNA synthetase family. EpmA subfamily. As to quaternary structure, homodimer.

It catalyses the reaction D-beta-lysine + L-lysyl-[protein] + ATP = N(6)-((3R)-3,6-diaminohexanoyl)-L-lysyl-[protein] + AMP + diphosphate + H(+). In terms of biological role, with EpmB is involved in the beta-lysylation step of the post-translational modification of translation elongation factor P (EF-P). Catalyzes the ATP-dependent activation of (R)-beta-lysine produced by EpmB, forming a lysyl-adenylate, from which the beta-lysyl moiety is then transferred to the epsilon-amino group of a conserved specific lysine residue in EF-P. The chain is Elongation factor P--(R)-beta-lysine ligase from Proteus mirabilis (strain HI4320).